A 600-amino-acid chain; its full sequence is Glutamine--fructose-6-phosphate aminotransferase [isomerizing] (600 aa).

Cys-2 (nucleophile; for GATase activity) is an active-site residue. One can recognise a Glutamine amidotransferase type-2 domain in the interval 2-217 (CGIVGFIGEQ…DKEIVIVTKE (216 aa)). SIS domains follow at residues 283–422 (IRNA…AKGE) and 452–590 (LAKQ…VDKP). Lys-595 acts as the For Fru-6P isomerization activity in catalysis.

Homodimer.

The protein resides in the cytoplasm. The enzyme catalyses D-fructose 6-phosphate + L-glutamine = D-glucosamine 6-phosphate + L-glutamate. Functionally, catalyzes the first step in hexosamine metabolism, converting fructose-6P into glucosamine-6P using glutamine as a nitrogen source. This Bacillus cereus (strain ATCC 14579 / DSM 31 / CCUG 7414 / JCM 2152 / NBRC 15305 / NCIMB 9373 / NCTC 2599 / NRRL B-3711) protein is Glutamine--fructose-6-phosphate aminotransferase [isomerizing].